Here is a 169-residue protein sequence, read N- to C-terminus: Putative pre-16S rRNA nuclease (169 aa).

Over residues 1-19 (MTDSDHRLPDRPGEGDPGR) the composition is skewed to basic and acidic residues. The disordered stretch occupies residues 1–22 (MTDSDHRLPDRPGEGDPGRGRR).

The protein belongs to the YqgF nuclease family.

Its subcellular location is the cytoplasm. Its function is as follows. Could be a nuclease involved in processing of the 5'-end of pre-16S rRNA. This Mycobacterium sp. (strain JLS) protein is Putative pre-16S rRNA nuclease.